Here is a 1140-residue protein sequence, read N- to C-terminus: MARYTQRPENALKRANEFIEVGKPLRALDTLQEVFRNKRWNYAYSETVIEPLMFKYLYLCVELKKSHIAKEGLFQYRNMFQLVNVNSLENVIRGYLKMAEEHTEAAQAQSSAAVAVLELDDLDNIATPESILMSAVCGEDAQDRSDRTILLPWVKFLWESYCQCLELLRVNTHCEALYHDIARMAFQFCLKYNRKSEFRRLCDKLRKHLEDICKSSNQTTGVSINKVETQQLCLDTRLYLLDSAIQMELWQEAYKAIEDIHGLMALSKKTPVPKTMANYYQKLAMVFSKAGNQLFHAAALLKLFQLTRELKKNLTKDDLQRMAAHVLLATLSIPLPSAHPEFDRFIEADKSPLEKAQKLAVLLGLPQPPTRVSLIREVVRLNVPQLVSEDFRNLYNWLEIDFNPLNLCKRIQSIVDIIEGGPAESNLLTPYIQSLKDVTIMRLIRQISQVYESIEFKRLLELASFCNIFELEKLLVESVRHNDMQIRIDHQKNSIYFGTDLTESQREYRPDGPSLQSMPSEQIRSQLVNMSTVLTRAVSIVYPNRERDQRAKLRTQMVHHYHEIKDREHQRILQRQKIIEDRKEYIEKQNNAREEEEARRQEEESRKAKLAEQKRLEQEQEERERKRHQNEIQAIREKSLKEKVQQISQTAHGKKMLSKLDEEGIKKLDAEQIAKRENEELQREAKELQSKLKSQEKKVDYFERAKRLEEIPLFEKYLAEKQVKDKEFWEATEKTRIENAIAERKDAVSQQERLKRMYPDRDEYLDALKKERASLYVEKLKKFEIALEVERKKRLADRIVRRREERRQAFLREKEEERLRKEEEIRLAQAAEERAAAEARRLEREAEDEKRRAQYEKQRAKEEEAERKIKEDRERLAREVAVERERSEKERDTWRPRGGDRPSAPAGGAGEWRRAAPPAGERNDRGAERSERGGDRNERGGDRIERGGDRIERGGERAERGGDRDRKDDGGADSSWRVRREPDSQRAAGAKDAGGAPASRDDKWRRGGDRERDRDFRNDGPRRDRDDRDDRDRGGFRRNDGPRRNDEPQRETGGNWRDAPRQSDRDNRRPGGERRDRDGRDVRGDQRGPASKEAGGGGGGGNWRTAPAPRDEKPAAKRDQPQDKENKGGDDGEWTSVKRR.

In terms of domain architecture, PCI spans 319 to 502; sequence LQRMAAHVLL…NSIYFGTDLT (184 aa). 3 stretches are compositionally biased toward basic and acidic residues: residues 589–624, 830–900, and 921–984; these read QNNAREEEEARRQEEESRKAKLAEQKRLEQEQEERE, AAEE…RGGD, and ERND…EPDS. 2 disordered regions span residues 589 to 632 and 830 to 1140; these read QNNA…QNEI and AAEE…VKRR. Residues 987–998 are compositionally biased toward low complexity; sequence AAGAKDAGGAPA. 3 stretches are compositionally biased toward basic and acidic residues: residues 999 to 1050, 1058 to 1086, and 1109 to 1130; these read SRDD…EPQR, DAPRQSDRDNRRPGGERRDRDGRDVRGDQ, and PRDEKPAAKRDQPQDKENKGGD.

Belongs to the eIF-3 subunit A family. In terms of assembly, component of the eukaryotic translation initiation factor 3 (eIF-3) complex. The eIF-3 complex interacts with pix.

It localises to the cytoplasm. RNA-binding component of the eukaryotic translation initiation factor 3 (eIF-3) complex, which is involved in protein synthesis of a specialized repertoire of mRNAs and, together with other initiation factors, stimulates binding of mRNA and methionyl-tRNAi to the 40S ribosome. The eIF-3 complex specifically targets and initiates translation of a subset of mRNAs involved in cell proliferation. In Drosophila ananassae (Fruit fly), this protein is Eukaryotic translation initiation factor 3 subunit A.